Here is a 376-residue protein sequence, read N- to C-terminus: Multiphosphoryl transfer protein (376 aa).

Residues 2–142 (FQLSVQDIHP…EELRALLMGE (141 aa)) form the PTS EIIA type-2 domain. His-62 functions as the Tele-phosphohistidine intermediate; for EIIA activity in the catalytic mechanism. Residue His-62 is modified to Phosphohistidine; by HPr. A m domain region spans residues 156–284 (TLDVIASSLV…LTSDDALTDD (129 aa)). The 91-residue stretch at 285-375 (VLSAEFVVRN…DAIAAGLGEG (91 aa)) folds into the HPr domain. The active-site Pros-phosphohistidine intermediate; for HPr activity is the His-299. At His-299 the chain carries Phosphohistidine; by EI.

It localises to the cytoplasm. In terms of biological role, the phosphoenolpyruvate-dependent sugar phosphotransferase system (sugar PTS), a major carbohydrate active transport system, catalyzes the phosphorylation of incoming sugar substrates concomitantly with their translocation across the cell membrane. The enzyme II FruAB PTS system is involved in fructose transport. This is Multiphosphoryl transfer protein (fruB) from Salmonella typhi.